We begin with the raw amino-acid sequence, 354 residues long: tRNA N6-adenosine threonylcarbamoyltransferase (354 aa).

Residues H111 and H115 each contribute to the Fe cation site. Substrate contacts are provided by residues 134 to 138 (LVSGG), D167, G180, and N279. Residue D319 participates in Fe cation binding.

This sequence belongs to the KAE1 / TsaD family. The cofactor is Fe(2+).

Its subcellular location is the cytoplasm. The catalysed reaction is L-threonylcarbamoyladenylate + adenosine(37) in tRNA = N(6)-L-threonylcarbamoyladenosine(37) in tRNA + AMP + H(+). Its function is as follows. Required for the formation of a threonylcarbamoyl group on adenosine at position 37 (t(6)A37) in tRNAs that read codons beginning with adenine. Is involved in the transfer of the threonylcarbamoyl moiety of threonylcarbamoyl-AMP (TC-AMP) to the N6 group of A37, together with TsaE and TsaB. TsaD likely plays a direct catalytic role in this reaction. The polypeptide is tRNA N6-adenosine threonylcarbamoyltransferase (Neisseria meningitidis serogroup C / serotype 2a (strain ATCC 700532 / DSM 15464 / FAM18)).